The following is a 328-amino-acid chain: Basic leucine zipper (bZIP) transcription factor atfB (328 aa).

The disordered stretch occupies residues 1–39 (MLPEQSAFGRSAMPGSDAVNPGPSPFAPPPNSFSGDFLG). Over residues 22–31 (GPSPFAPPPN) the composition is skewed to pro residues. Positions 163 to 202 (KAKREKFLERNRLAASKCRQKKKEHTQLLESRYREQSDKK) are basic motif. The region spanning 163-226 (KAKREKFLER…LGLKNEVLKH (64 aa)) is the bZIP domain. The tract at residues 205 to 219 (LVSEIARLRSEILGL) is leucine-zipper. Residues 250-313 (TTAPDLTDVP…SEASVLTENS (64 aa)) are disordered. Polar residues predominate over residues 262-277 (ASSSEGPMTPRPQQAL). Over residues 283-305 (DPLHLEPSRADGSTDHSVRRDSE) the composition is skewed to basic and acidic residues.

The protein belongs to the bZIP family. ATF subfamily.

It is found in the nucleus. Functionally, transcription factor that acts as a key player in the regulatory circuit that integrates secondary metabolism and cellular response to oxidative stress. Regulates the genes involved in development, as well as osmotic, oxidative, and cell wall stresses. Participates in the caspofungin paradoxical effect (CPE), where fungi grow beyond the minimum inhibitory concentration of caspofungin. Plays a role in virulence. This chain is Basic leucine zipper (bZIP) transcription factor atfB, found in Aspergillus fumigatus (strain ATCC MYA-4609 / CBS 101355 / FGSC A1100 / Af293) (Neosartorya fumigata).